A 211-amino-acid chain; its full sequence is Probable nicotinate-nucleotide adenylyltransferase (211 aa).

This sequence belongs to the NadD family.

It catalyses the reaction nicotinate beta-D-ribonucleotide + ATP + H(+) = deamido-NAD(+) + diphosphate. The protein operates within cofactor biosynthesis; NAD(+) biosynthesis; deamido-NAD(+) from nicotinate D-ribonucleotide: step 1/1. Its function is as follows. Catalyzes the reversible adenylation of nicotinate mononucleotide (NaMN) to nicotinic acid adenine dinucleotide (NaAD). This is Probable nicotinate-nucleotide adenylyltransferase from Legionella pneumophila (strain Lens).